The primary structure comprises 311 residues: Porphobilinogen deaminase (311 aa).

The residue at position 242 (Cys242) is an S-(dipyrrolylmethanemethyl)cysteine.

Belongs to the HMBS family. As to quaternary structure, monomer. Dipyrromethane is required as a cofactor.

It carries out the reaction 4 porphobilinogen + H2O = hydroxymethylbilane + 4 NH4(+). Its pathway is porphyrin-containing compound metabolism; protoporphyrin-IX biosynthesis; coproporphyrinogen-III from 5-aminolevulinate: step 2/4. Its function is as follows. Tetrapolymerization of the monopyrrole PBG into the hydroxymethylbilane pre-uroporphyrinogen in several discrete steps. The polypeptide is Porphobilinogen deaminase (Hahella chejuensis (strain KCTC 2396)).